The following is a 500-amino-acid chain: Probable glycine dehydrogenase (decarboxylating) subunit 2 (500 aa).

The segment at 1–25 (MLIFEHSRPGRRNYSQSPKAAEATD) is disordered. Lysine 263 bears the N6-(pyridoxal phosphate)lysine mark.

It belongs to the GcvP family. C-terminal subunit subfamily. The glycine cleavage system is composed of four proteins: P, T, L and H. In this organism, the P 'protein' is a heterodimer of two subunits. Pyridoxal 5'-phosphate is required as a cofactor.

The catalysed reaction is N(6)-[(R)-lipoyl]-L-lysyl-[glycine-cleavage complex H protein] + glycine + H(+) = N(6)-[(R)-S(8)-aminomethyldihydrolipoyl]-L-lysyl-[glycine-cleavage complex H protein] + CO2. In terms of biological role, the glycine cleavage system catalyzes the degradation of glycine. The P protein binds the alpha-amino group of glycine through its pyridoxal phosphate cofactor; CO(2) is released and the remaining methylamine moiety is then transferred to the lipoamide cofactor of the H protein. The sequence is that of Probable glycine dehydrogenase (decarboxylating) subunit 2 from Nitrosospira multiformis (strain ATCC 25196 / NCIMB 11849 / C 71).